We begin with the raw amino-acid sequence, 135 residues long: Thioredoxin H5 (135 aa).

One can recognise a Thioredoxin domain in the interval 13-128 (EHLDYSGGNV…LQEKFEQLNR (116 aa)). Residues cysteine 54 and cysteine 57 each act as nucleophile in the active site. A disulfide bridge connects residues cysteine 54 and cysteine 57.

The protein belongs to the thioredoxin family. Plant H-type subfamily.

Its subcellular location is the cytoplasm. Its function is as follows. Probable thiol-disulfide oxidoreductase that may be involved in the redox regulation of a number of cytosolic enzymes. This is Thioredoxin H5 from Oryza sativa subsp. japonica (Rice).